Here is a 1257-residue protein sequence, read N- to C-terminus: Endochitinase A (1257 aa).

The signal sequence occupies residues 1-21 (MVFKPLTIAAAIAGLTPFVSA). The 312-residue stretch at 28-339 (SNVAVYYGQG…DVIKDILVAV (312 aa)) folds into the GH18 domain. The active-site Proton donor is the E175. 3 disordered regions span residues 364-429 (TPVA…STPV), 595-980 (TPAA…LAPI), and 1141-1174 (DALT…PTTT). The segment covering 595–696 (TPAASSSPAV…STPVRSTSSV (102 aa)) has biased composition (low complexity). Over residues 700–715 (KSSSAPVIPKPSSTVI) the composition is skewed to polar residues. Residues 716-935 (ATFTSSSGSL…ASGSGAQDST (220 aa)) are compositionally biased toward low complexity. N825 carries an N-linked (GlcNAc...) asparagine glycan. Polar residues predominate over residues 940 to 964 (HASTLSPSYSTPLASASGQTGSPTT). The N-linked (GlcNAc...) asparagine glycan is linked to N973. Polar residues predominate over residues 1145-1154 (ASPSGSQPAG). The segment covering 1156-1174 (SSPGQSAPTAPASTAPTTT) has biased composition (low complexity). The GPI-anchor amidated glycine moiety is linked to residue G1231. A propeptide spans 1232–1257 (AASRVSRLQHGAGAVSAFALFLLAAI) (removed in mature form).

This sequence belongs to the glycosyl hydrolase 18 family. Chitinase class III subfamily. In terms of processing, O-glycosylated.

The protein resides in the cell membrane. It localises to the secreted. It is found in the cell wall. It carries out the reaction Random endo-hydrolysis of N-acetyl-beta-D-glucosaminide (1-&gt;4)-beta-linkages in chitin and chitodextrins.. In terms of biological role, GPI-anchored chitinase involved in the degradation of chitin, a component of the cell walls of fungi and exoskeletal elements of some animals (including worms and arthropods). Required to reshape the cell wall at the sites where cell wall remodeling and/or cell wall maturation actively take place such as sites of conidia formation. The sequence is that of Endochitinase A (ctcA) from Aspergillus niger (strain ATCC MYA-4892 / CBS 513.88 / FGSC A1513).